We begin with the raw amino-acid sequence, 249 residues long: uncharacterized protein (249 aa).

Residues 51 to 67 are compositionally biased toward polar residues; that stretch reads IPKDSLTNGKSSKNCMS. Disordered regions lie at residues 51-131 and 205-240; these read IPKD…DSPV and YLNASLSEDDTDSIVGTDYSEEEKESISETESSSDG. Low complexity predominate over residues 93-106; it reads SFQSMNSSMSSSTQ. Residues 110 to 129 show a composition bias toward basic and acidic residues; sequence RILDEKNKDQSSSNENDRDS.

It belongs to the asfivirus DP238L family.

This is an uncharacterized protein from African swine fever virus (isolate Tick/Malawi/Lil 20-1/1983) (ASFV).